We begin with the raw amino-acid sequence, 310 residues long: Glutaminase (310 aa).

Positions 66, 117, 161, 168, 192, 244, and 262 each coordinate substrate.

This sequence belongs to the glutaminase family. As to quaternary structure, homotetramer.

It catalyses the reaction L-glutamine + H2O = L-glutamate + NH4(+). The sequence is that of Glutaminase from Shigella boydii serotype 4 (strain Sb227).